A 606-amino-acid chain; its full sequence is Pescadillo homolog (606 aa).

One can recognise a BRCT domain in the interval 346–447 (LSTSLFSPYT…KILLEGPYGQ (102 aa)). A disordered region spans residues 461–497 (YEGAYDPAAGPLGPSGVEQESESEADEVSEEDEEDQG). Positions 479–496 (QESESEADEVSEEDEEDQ) are enriched in acidic residues.

This sequence belongs to the pescadillo family. Component of the NOP7 complex, composed of ERB1, NOP7 and YTM1. The complex is held together by ERB1, which interacts with NOP7 via its N-terminal domain and with YTM1 via a high-affinity interaction between the seven-bladed beta-propeller domains of the 2 proteins. The NOP7 complex associates with the 66S pre-ribosome.

It is found in the nucleus. The protein resides in the nucleolus. It localises to the nucleoplasm. Its function is as follows. Component of the NOP7 complex, which is required for maturation of the 25S and 5.8S ribosomal RNAs and formation of the 60S ribosome. This chain is Pescadillo homolog, found in Laccaria bicolor (strain S238N-H82 / ATCC MYA-4686) (Bicoloured deceiver).